The following is a 705-amino-acid chain: Translation initiation factor IF-2 (705 aa).

Positions 40 to 124 (DDQIKALDKK…QPAAPKEIPS (85 aa)) are disordered. Residues 41 to 58 (DQIKALDKKFKKEQKNDN) show a composition bias toward basic and acidic residues. Residues 59-77 (KQSTQNNHQKSNNQNQNKG) are compositionally biased toward low complexity. Residues 94–108 (KGNKKNNRNNKKNNK) are compositionally biased toward basic residues. The region spanning 207 to 376 (ERPAVVTIMG…GLVAEVQELK (170 aa)) is the tr-type G domain. The interval 216–223 (GHVDHGKT) is G1. Residue 216 to 223 (GHVDHGKT) participates in GTP binding. Positions 241–245 (GITQH) are G2. The interval 262-265 (DTPG) is G3. GTP-binding positions include 262–266 (DTPGH) and 316–319 (NKID). The segment at 316-319 (NKID) is G4. The segment at 352 to 354 (SAL) is G5.

It belongs to the TRAFAC class translation factor GTPase superfamily. Classic translation factor GTPase family. IF-2 subfamily.

The protein localises to the cytoplasm. One of the essential components for the initiation of protein synthesis. Protects formylmethionyl-tRNA from spontaneous hydrolysis and promotes its binding to the 30S ribosomal subunits. Also involved in the hydrolysis of GTP during the formation of the 70S ribosomal complex. This is Translation initiation factor IF-2 from Staphylococcus aureus (strain MRSA252).